The following is a 460-amino-acid chain: Serine--tRNA ligase (460 aa).

Residues 50–65 are compositionally biased toward basic and acidic residues; sequence DRNEVSSKIGELKQAG. Disordered regions lie at residues 50 to 71 and 109 to 129; these read DRNE…DAAQ and PDED…RREG. The span at 109–121 shows a compositional bias: acidic residues; that stretch reads PDEDAPVGDSEAE. Position 241 to 243 (241 to 243) interacts with L-serine; it reads TAE. Residues 272–274 and valine 288 each bind ATP; that span reads RRE. L-serine is bound at residue glutamate 295. 368-371 provides a ligand contact to ATP; the sequence is EVSS. Serine 404 lines the L-serine pocket.

This sequence belongs to the class-II aminoacyl-tRNA synthetase family. Type-1 seryl-tRNA synthetase subfamily. As to quaternary structure, homodimer. The tRNA molecule binds across the dimer.

It localises to the cytoplasm. The catalysed reaction is tRNA(Ser) + L-serine + ATP = L-seryl-tRNA(Ser) + AMP + diphosphate + H(+). The enzyme catalyses tRNA(Sec) + L-serine + ATP = L-seryl-tRNA(Sec) + AMP + diphosphate + H(+). Its pathway is aminoacyl-tRNA biosynthesis; selenocysteinyl-tRNA(Sec) biosynthesis; L-seryl-tRNA(Sec) from L-serine and tRNA(Sec): step 1/1. In terms of biological role, catalyzes the attachment of serine to tRNA(Ser). Is also able to aminoacylate tRNA(Sec) with serine, to form the misacylated tRNA L-seryl-tRNA(Sec), which will be further converted into selenocysteinyl-tRNA(Sec). The protein is Serine--tRNA ligase of Halobacterium salinarum (strain ATCC 29341 / DSM 671 / R1).